Consider the following 122-residue polypeptide: Large ribosomal subunit protein uL18 (122 aa).

Residues 1–22 (MDKNKKLQSKRLRRRRHVRNKL) are compositionally biased toward basic residues. The tract at residues 1 to 25 (MDKNKKLQSKRLRRRRHVRNKLRGS) is disordered.

The protein belongs to the universal ribosomal protein uL18 family. As to quaternary structure, part of the 50S ribosomal subunit; part of the 5S rRNA/L5/L18/L25 subcomplex. Contacts the 5S and 23S rRNAs.

In terms of biological role, this is one of the proteins that bind and probably mediate the attachment of the 5S RNA into the large ribosomal subunit, where it forms part of the central protuberance. This Rhodopirellula baltica (strain DSM 10527 / NCIMB 13988 / SH1) protein is Large ribosomal subunit protein uL18.